Here is a 145-residue protein sequence, read N- to C-terminus: Large ribosomal subunit protein uL15 (145 aa).

The tract at residues 1 to 42 (MELHTLKATPGSRKAKHRVGRGHAAGKGKQAGRGQSGQTKRS) is disordered. The span at 13–26 (RKAKHRVGRGHAAG) shows a compositional bias: basic residues.

The protein belongs to the universal ribosomal protein uL15 family. Part of the 50S ribosomal subunit.

Binds to the 23S rRNA. This is Large ribosomal subunit protein uL15 from Metamycoplasma arthritidis (strain 158L3-1) (Mycoplasma arthritidis).